The following is a 460-amino-acid chain: Tyrosine phenol-lyase (460 aa).

Residue Lys-260 is modified to N6-(pyridoxal phosphate)lysine.

This sequence belongs to the beta-eliminating lyase family. In terms of assembly, homotetramer. Pyridoxal 5'-phosphate serves as cofactor.

It catalyses the reaction L-tyrosine + H2O = phenol + pyruvate + NH4(+). In Fusobacterium nucleatum subsp. nucleatum (strain ATCC 25586 / DSM 15643 / BCRC 10681 / CIP 101130 / JCM 8532 / KCTC 2640 / LMG 13131 / VPI 4355), this protein is Tyrosine phenol-lyase.